The sequence spans 223 residues: Deoxyribose-phosphate aldolase (223 aa).

The active-site Proton donor/acceptor is aspartate 91. The active-site Schiff-base intermediate with acetaldehyde is lysine 153. Lysine 182 (proton donor/acceptor) is an active-site residue.

It belongs to the DeoC/FbaB aldolase family. DeoC type 1 subfamily.

It is found in the cytoplasm. It catalyses the reaction 2-deoxy-D-ribose 5-phosphate = D-glyceraldehyde 3-phosphate + acetaldehyde. It participates in carbohydrate degradation; 2-deoxy-D-ribose 1-phosphate degradation; D-glyceraldehyde 3-phosphate and acetaldehyde from 2-deoxy-alpha-D-ribose 1-phosphate: step 2/2. Functionally, catalyzes a reversible aldol reaction between acetaldehyde and D-glyceraldehyde 3-phosphate to generate 2-deoxy-D-ribose 5-phosphate. This chain is Deoxyribose-phosphate aldolase, found in Streptococcus pyogenes serotype M2 (strain MGAS10270).